Here is a 248-residue protein sequence, read N- to C-terminus: Pulmonary surfactant-associated protein A2 (248 aa).

The signal sequence occupies residues 1-20 (MWLCPLALTLILMAASGAAC). One can recognise a Collagen-like domain in the interval 28-100 (GSPGIPGTPG…AGERGPPGLP (73 aa)). Residues Pro30, Pro33, Pro36, Pro42, Pro54, Pro57, Pro63, Pro67, and Pro70 each carry the 4-hydroxyproline modification. The segment at 33–101 (PGTPGSHGLP…GERGPPGLPA (69 aa)) is disordered. Positions 42-51 (PGRDGRDGVK) are enriched in basic and acidic residues. Over residues 54-70 (PGPPGPMGPPGETPCPP) the composition is skewed to pro residues. Over residues 71-82 (GNNGLPGAPGVP) the composition is skewed to low complexity. Over residues 84 to 93 (ERGEKGEAGE) the composition is skewed to basic and acidic residues. The C-type lectin domain maps to 132–248 (MTVGEKVFSS…LYSRLTICEF (117 aa)). 2 cysteine pairs are disulfide-bonded: Cys155–Cys246 and Cys224–Cys238. An N-linked (GlcNAc...) asparagine glycan is attached at Asn207.

The protein belongs to the SFTPA family. In terms of assembly, oligomeric complex of 6 set of homotrimers. In terms of processing, N-acetylated.

It is found in the secreted. The protein localises to the extracellular space. It localises to the extracellular matrix. The protein resides in the surface film. In presence of calcium ions, it binds to surfactant phospholipids and contributes to lower the surface tension at the air-liquid interface in the alveoli of the mammalian lung and is essential for normal respiration. This is Pulmonary surfactant-associated protein A2 (SFTPA2) from Homo sapiens (Human).